The chain runs to 491 residues: Cytochrome P450 2K3 (491 aa).

Cysteine 434 provides a ligand contact to heme.

Belongs to the cytochrome P450 family. Heme is required as a cofactor.

It localises to the endoplasmic reticulum membrane. It is found in the microsome membrane. The enzyme catalyses an organic molecule + reduced [NADPH--hemoprotein reductase] + O2 = an alcohol + oxidized [NADPH--hemoprotein reductase] + H2O + H(+). The sequence is that of Cytochrome P450 2K3 (cyp2k3) from Oncorhynchus mykiss (Rainbow trout).